The following is a 748-amino-acid chain: Catalase-peroxidase (748 aa).

The tryptophyl-tyrosyl-methioninium (Trp-Tyr) (with M-262) cross-link spans 91 to 236 (WHSAGTYRVG…LAAVQMGLIY (146 aa)). H92 acts as the Proton acceptor in catalysis. The tract at residues 201 to 223 (AQPVADKAGHGKEHGRTDGGRNL) is disordered. Residues 207-221 (KAGHGKEHGRTDGGR) are compositionally biased toward basic and acidic residues. The tryptophyl-tyrosyl-methioninium (Tyr-Met) (with W-91) cross-link spans 236–262 (YVNPEGPDGNPDPQASAHDIRETFARM). Residue H277 participates in heme b binding.

Belongs to the peroxidase family. Peroxidase/catalase subfamily. In terms of assembly, homodimer or homotetramer. Requires heme b as cofactor. Formation of the three residue Trp-Tyr-Met cross-link is important for the catalase, but not the peroxidase activity of the enzyme.

It catalyses the reaction H2O2 + AH2 = A + 2 H2O. It carries out the reaction 2 H2O2 = O2 + 2 H2O. Functionally, bifunctional enzyme with both catalase and broad-spectrum peroxidase activity. This is Catalase-peroxidase from Bordetella avium (strain 197N).